The sequence spans 554 residues: Rab GTPase-binding effector protein 2 (554 aa).

Low complexity predominate over residues 1–15 (MAAAPAALALDPQPQ). Disordered regions lie at residues 1–29 (MAAA…ELSR), 167–250 (IQRR…ETAS), and 375–395 (EQLP…DEAL). A coiled-coil region spans residues 15-173 (QEEQKDASES…IQEIQRRPRQ (159 aa)). A compositionally biased stretch (basic and acidic residues) spans 16–29 (EEQKDASESSELSR). A phosphoserine mark is found at serine 176, serine 180, serine 187, and serine 191. Residues 274–512 (DSQWEQLQVE…LETSEQVQRD (239 aa)) adopt a coiled-coil conformation. Polar residues predominate over residues 377–386 (LPSSALQGSE).

This sequence belongs to the rabaptin family. In terms of assembly, heterodimer with RABGEF1. The dimer binds RAB5A that has been activated by GTP-binding. Interacts with SDCCAG8; this interaction is important for ciliogenesis regulation. Interacts with RAB4A; this interaction may mediate VEGFR2 cell surface expression.

The protein localises to the cytoplasm. Its subcellular location is the early endosome. It is found in the cytoskeleton. The protein resides in the microtubule organizing center. It localises to the centrosome. The protein localises to the cilium basal body. In terms of biological role, plays a role in membrane trafficking and in homotypic early endosome fusion. Participates in arteriogenesis by regulating vascular endothelial growth factor receptor 2/VEGFR2 cell surface expression and endosomal trafficking. By interacting with SDCCAG8, localizes to centrosomes and plays a critical role in ciliogenesis. This is Rab GTPase-binding effector protein 2 (Rabep2) from Rattus norvegicus (Rat).